Here is a 276-residue protein sequence, read N- to C-terminus: 2-dehydro-3-deoxyphosphooctonate aldolase (276 aa).

This sequence belongs to the KdsA family.

It is found in the cytoplasm. The enzyme catalyses D-arabinose 5-phosphate + phosphoenolpyruvate + H2O = 3-deoxy-alpha-D-manno-2-octulosonate-8-phosphate + phosphate. The protein operates within carbohydrate biosynthesis; 3-deoxy-D-manno-octulosonate biosynthesis; 3-deoxy-D-manno-octulosonate from D-ribulose 5-phosphate: step 2/3. It participates in bacterial outer membrane biogenesis; lipopolysaccharide biosynthesis. The protein is 2-dehydro-3-deoxyphosphooctonate aldolase of Helicobacter acinonychis (strain Sheeba).